The chain runs to 290 residues: 4-hydroxy-tetrahydrodipicolinate synthase (290 aa).

Residue Thr-44 participates in pyruvate binding. Residue Tyr-132 is the Proton donor/acceptor of the active site. The active-site Schiff-base intermediate with substrate is the Lys-160. Position 202 (Ile-202) interacts with pyruvate.

It belongs to the DapA family. Homotetramer; dimer of dimers.

It is found in the cytoplasm. It catalyses the reaction L-aspartate 4-semialdehyde + pyruvate = (2S,4S)-4-hydroxy-2,3,4,5-tetrahydrodipicolinate + H2O + H(+). The protein operates within amino-acid biosynthesis; L-lysine biosynthesis via DAP pathway; (S)-tetrahydrodipicolinate from L-aspartate: step 3/4. In terms of biological role, catalyzes the condensation of (S)-aspartate-beta-semialdehyde [(S)-ASA] and pyruvate to 4-hydroxy-tetrahydrodipicolinate (HTPA). This is 4-hydroxy-tetrahydrodipicolinate synthase from Alkaliphilus oremlandii (strain OhILAs) (Clostridium oremlandii (strain OhILAs)).